A 788-amino-acid chain; its full sequence is Ribonucleoside-diphosphate reductase subunit alpha (788 aa).

An ATP-cone domain is found at 2-92; sequence ITVVKRNGRI…LYDLYHKVSG (91 aa). ATP is bound by residues lysine 6, 12 to 18, and threonine 52; that span reads EPLDITK. Threonine 200 is a GDP binding site. Cysteine 216 and cysteine 497 are oxidised to a cystine. DTTP-binding positions include 223-225 and arginine 253; that span reads DNI. Residue asparagine 424 coordinates GDP. Asparagine 424 (proton acceptor) is an active-site residue. Residue cysteine 426 is the Cysteine radical intermediate of the active site. GDP contacts are provided by residues glutamate 428 and 661 to 663; that span reads SSI. The Proton acceptor role is filled by glutamate 428.

Belongs to the ribonucleoside diphosphate reductase large chain family. In terms of assembly, tetramer of two alpha and two beta subunits.

It carries out the reaction a 2'-deoxyribonucleoside 5'-diphosphate + [thioredoxin]-disulfide + H2O = a ribonucleoside 5'-diphosphate + [thioredoxin]-dithiol. Its activity is regulated as follows. Under complex allosteric control mediated by deoxynucleoside triphosphates and ATP binding to separate specificity and activation sites on the alpha subunit. The type of nucleotide bound at the specificity site determines substrate preference. It seems probable that ATP makes the enzyme reduce CDP and UDP, dGTP favors ADP reduction and dTTP favors GDP reduction. Stimulated by ATP and inhibited by dATP binding to the activity site. In terms of biological role, provides the precursors necessary for DNA synthesis. Catalyzes the biosynthesis of deoxyribonucleotides from the corresponding ribonucleotides. This Helicobacter pylori (strain ATCC 700392 / 26695) (Campylobacter pylori) protein is Ribonucleoside-diphosphate reductase subunit alpha (nrdA).